The primary structure comprises 513 residues: ATP synthase subunit alpha (513 aa).

169 to 176 (GDRQIGKT) serves as a coordination point for ATP.

The protein belongs to the ATPase alpha/beta chains family. F-type ATPases have 2 components, CF(1) - the catalytic core - and CF(0) - the membrane proton channel. CF(1) has five subunits: alpha(3), beta(3), gamma(1), delta(1), epsilon(1). CF(0) has three main subunits: a(1), b(2) and c(9-12). The alpha and beta chains form an alternating ring which encloses part of the gamma chain. CF(1) is attached to CF(0) by a central stalk formed by the gamma and epsilon chains, while a peripheral stalk is formed by the delta and b chains.

The protein resides in the cell inner membrane. It catalyses the reaction ATP + H2O + 4 H(+)(in) = ADP + phosphate + 5 H(+)(out). Its function is as follows. Produces ATP from ADP in the presence of a proton gradient across the membrane. The alpha chain is a regulatory subunit. The protein is ATP synthase subunit alpha of Shewanella sediminis (strain HAW-EB3).